The primary structure comprises 623 residues: V-type proton ATPase catalytic subunit A (623 aa).

252 to 259 (GAFGCGKT) is an ATP binding site.

This sequence belongs to the ATPase alpha/beta chains family. V-ATPase is a heteromultimeric enzyme composed of a peripheral catalytic V1 complex (main components: subunits A, B, C, D, E, and F) attached to an integral membrane V0 proton pore complex (main component: the proteolipid protein).

The enzyme catalyses ATP + H2O + 4 H(+)(in) = ADP + phosphate + 5 H(+)(out). Catalytic subunit of the peripheral V1 complex of vacuolar ATPase. V-ATPase vacuolar ATPase is responsible for acidifying a variety of intracellular compartments in eukaryotic cells. The chain is V-type proton ATPase catalytic subunit A from Citrus unshiu (Satsuma mandarin).